Reading from the N-terminus, the 185-residue chain is Ribosome-recycling factor (185 aa).

This sequence belongs to the RRF family.

The protein localises to the cytoplasm. Responsible for the release of ribosomes from messenger RNA at the termination of protein biosynthesis. May increase the efficiency of translation by recycling ribosomes from one round of translation to another. The chain is Ribosome-recycling factor from Trichlorobacter lovleyi (strain ATCC BAA-1151 / DSM 17278 / SZ) (Geobacter lovleyi).